The sequence spans 174 residues: Beta-lactoglobulin (174 aa).

The first 18 residues, 1–18 (MKFLLLTVGLALIGAIQA), serve as a signal peptide directing secretion. 2 disulfides stabilise this stretch: Cys-79/Cys-172 and Cys-122/Cys-134.

The protein belongs to the calycin superfamily. Lipocalin family. As to quaternary structure, monomer.

The protein localises to the secreted. Lactoglobulin is the primary component of whey, it binds retinol and is probably involved in the transport of that molecule. The sequence is that of Beta-lactoglobulin (LGB) from Notamacropus eugenii (Tammar wallaby).